Reading from the N-terminus, the 469-residue chain is Abscisic acid 8'-hydroxylase CYP707A2 (469 aa).

The chain crosses the membrane as a helical span at residues 3–23; that stretch reads FVSMLCLFTFISLTLLLIHSI. Cys-414 lines the heme pocket.

Belongs to the cytochrome P450 family. It depends on heme as a cofactor. As to expression, expressed at low levels in fruit.

The protein resides in the membrane. The catalysed reaction is 2-cis-(+)-abscisate + reduced [NADPH--hemoprotein reductase] + O2 = (+)-8'-hydroxyabscisate + oxidized [NADPH--hemoprotein reductase] + H2O + H(+). The protein operates within plant hormone degradation; abscisic acid degradation. In terms of biological role, negative regulator of fruit ripening involved in the oxidative degradation of abscisic acid (ABA). The protein is Abscisic acid 8'-hydroxylase CYP707A2 of Solanum lycopersicum (Tomato).